A 111-amino-acid polypeptide reads, in one-letter code: Ribosome-binding factor A (111 aa).

The protein belongs to the RbfA family. As to quaternary structure, monomer. Binds 30S ribosomal subunits, but not 50S ribosomal subunits or 70S ribosomes.

Its subcellular location is the cytoplasm. Functionally, one of several proteins that assist in the late maturation steps of the functional core of the 30S ribosomal subunit. Associates with free 30S ribosomal subunits (but not with 30S subunits that are part of 70S ribosomes or polysomes). Required for efficient processing of 16S rRNA. May interact with the 5'-terminal helix region of 16S rRNA. This is Ribosome-binding factor A from Helicobacter pylori (strain ATCC 700392 / 26695) (Campylobacter pylori).